Consider the following 179-residue polypeptide: Crossover junction endodeoxyribonuclease RuvC (179 aa).

Catalysis depends on residues D7, E67, and D140. D7, E67, and D140 together coordinate Mg(2+).

This sequence belongs to the RuvC family. Homodimer which binds Holliday junction (HJ) DNA. The HJ becomes 2-fold symmetrical on binding to RuvC with unstacked arms; it has a different conformation from HJ DNA in complex with RuvA. In the full resolvosome a probable DNA-RuvA(4)-RuvB(12)-RuvC(2) complex forms which resolves the HJ. The cofactor is Mg(2+).

It is found in the cytoplasm. It catalyses the reaction Endonucleolytic cleavage at a junction such as a reciprocal single-stranded crossover between two homologous DNA duplexes (Holliday junction).. Its function is as follows. The RuvA-RuvB-RuvC complex processes Holliday junction (HJ) DNA during genetic recombination and DNA repair. Endonuclease that resolves HJ intermediates. Cleaves cruciform DNA by making single-stranded nicks across the HJ at symmetrical positions within the homologous arms, yielding a 5'-phosphate and a 3'-hydroxyl group; requires a central core of homology in the junction. The consensus cleavage sequence is 5'-(A/T)TT(C/G)-3'. Cleavage occurs on the 3'-side of the TT dinucleotide at the point of strand exchange. HJ branch migration catalyzed by RuvA-RuvB allows RuvC to scan DNA until it finds its consensus sequence, where it cleaves and resolves the cruciform DNA. This chain is Crossover junction endodeoxyribonuclease RuvC, found in Salinibacter ruber (strain DSM 13855 / M31).